A 277-amino-acid chain; its full sequence is Shikimate dehydrogenase (NADP(+)) (277 aa).

Shikimate-binding positions include 15-17 (SLS) and T62. Residue K66 is the Proton acceptor of the active site. Shikimate is bound by residues N87 and D102. NADP(+) is bound by residues 127–131 (GAGGA), 151–156 (NRTVDK), and I219. Y221 serves as a coordination point for shikimate. G242 provides a ligand contact to NADP(+).

This sequence belongs to the shikimate dehydrogenase family. In terms of assembly, homodimer.

The enzyme catalyses shikimate + NADP(+) = 3-dehydroshikimate + NADPH + H(+). The protein operates within metabolic intermediate biosynthesis; chorismate biosynthesis; chorismate from D-erythrose 4-phosphate and phosphoenolpyruvate: step 4/7. Functionally, involved in the biosynthesis of the chorismate, which leads to the biosynthesis of aromatic amino acids. Catalyzes the reversible NADPH linked reduction of 3-dehydroshikimate (DHSA) to yield shikimate (SA). The polypeptide is Shikimate dehydrogenase (NADP(+)) (Bacillus cereus (strain ATCC 10987 / NRS 248)).